The chain runs to 473 residues: Cysteine--tRNA ligase (473 aa).

Zn(2+) is bound at residue cysteine 28. A 'HIGH' region motif is present at residues 30-40 (PTVYNMPHIGN). Zn(2+)-binding residues include cysteine 213, histidine 238, and glutamate 242. Positions 270 to 274 (KMSKS) match the 'KMSKS' region motif. Residue lysine 273 coordinates ATP.

It belongs to the class-I aminoacyl-tRNA synthetase family. Zn(2+) is required as a cofactor.

Its subcellular location is the cytoplasm. It carries out the reaction tRNA(Cys) + L-cysteine + ATP = L-cysteinyl-tRNA(Cys) + AMP + diphosphate. This is Cysteine--tRNA ligase from Methanosarcina mazei (strain ATCC BAA-159 / DSM 3647 / Goe1 / Go1 / JCM 11833 / OCM 88) (Methanosarcina frisia).